Consider the following 147-residue polypeptide: Mannitol-specific cryptic phosphotransferase enzyme IIA component (147 aa).

Residues Asp-5–Gly-147 enclose the PTS EIIA type-2 domain. His-67 acts as the Tele-phosphohistidine intermediate in catalysis. His-67 is subject to Phosphohistidine; by HPr.

It localises to the cytoplasm. Functionally, the phosphoenolpyruvate-dependent sugar phosphotransferase system (sugar PTS), a major carbohydrate active transport system, catalyzes the phosphorylation of incoming sugar substrates concomitantly with their translocation across the cell membrane. The enzyme II CmtAB PTS system is involved in D-mannitol transport. The protein is Mannitol-specific cryptic phosphotransferase enzyme IIA component (cmtB) of Escherichia coli O157:H7.